Consider the following 373-residue polypeptide: Queuine tRNA-ribosyltransferase (373 aa).

Catalysis depends on Asp-94, which acts as the Proton acceptor. Substrate-binding positions include 94–98 (DSGGF), Asp-148, Gln-191, and Gly-218. Residues 249 to 255 (GVGTPDY) are RNA binding. The Nucleophile role is filled by Asp-268. Positions 273-277 (TRIGR) are RNA binding; important for wobble base 34 recognition. 4 residues coordinate Zn(2+): Cys-306, Cys-308, Cys-311, and His-337.

Belongs to the queuine tRNA-ribosyltransferase family. Homodimer. Within each dimer, one monomer is responsible for RNA recognition and catalysis, while the other monomer binds to the replacement base PreQ1. Requires Zn(2+) as cofactor.

The catalysed reaction is 7-aminomethyl-7-carbaguanine + guanosine(34) in tRNA = 7-aminomethyl-7-carbaguanosine(34) in tRNA + guanine. It functions in the pathway tRNA modification; tRNA-queuosine biosynthesis. In terms of biological role, catalyzes the base-exchange of a guanine (G) residue with the queuine precursor 7-aminomethyl-7-deazaguanine (PreQ1) at position 34 (anticodon wobble position) in tRNAs with GU(N) anticodons (tRNA-Asp, -Asn, -His and -Tyr). Catalysis occurs through a double-displacement mechanism. The nucleophile active site attacks the C1' of nucleotide 34 to detach the guanine base from the RNA, forming a covalent enzyme-RNA intermediate. The proton acceptor active site deprotonates the incoming PreQ1, allowing a nucleophilic attack on the C1' of the ribose to form the product. After dissociation, two additional enzymatic reactions on the tRNA convert PreQ1 to queuine (Q), resulting in the hypermodified nucleoside queuosine (7-(((4,5-cis-dihydroxy-2-cyclopenten-1-yl)amino)methyl)-7-deazaguanosine). The protein is Queuine tRNA-ribosyltransferase of Ruminiclostridium cellulolyticum (strain ATCC 35319 / DSM 5812 / JCM 6584 / H10) (Clostridium cellulolyticum).